A 79-amino-acid polypeptide reads, in one-letter code: Acyl carrier protein (79 aa).

Residues 2 to 77 enclose the Carrier domain; the sequence is SEIADKVKKI…DAIDYIEKQK (76 aa). Serine 37 bears the O-(pantetheine 4'-phosphoryl)serine mark.

This sequence belongs to the acyl carrier protein (ACP) family. 4'-phosphopantetheine is transferred from CoA to a specific serine of apo-ACP by AcpS. This modification is essential for activity because fatty acids are bound in thioester linkage to the sulfhydryl of the prosthetic group.

It is found in the cytoplasm. Its pathway is lipid metabolism; fatty acid biosynthesis. Its function is as follows. Carrier of the growing fatty acid chain in fatty acid biosynthesis. This chain is Acyl carrier protein, found in Gluconacetobacter diazotrophicus (strain ATCC 49037 / DSM 5601 / CCUG 37298 / CIP 103539 / LMG 7603 / PAl5).